A 297-amino-acid polypeptide reads, in one-letter code: Ribosomal RNA small subunit methyltransferase H (297 aa).

S-adenosyl-L-methionine is bound by residues 30-32, aspartate 48, phenylalanine 75, aspartate 96, and glutamine 103; that span reads GGY.

It belongs to the methyltransferase superfamily. RsmH family.

The protein localises to the cytoplasm. It carries out the reaction cytidine(1402) in 16S rRNA + S-adenosyl-L-methionine = N(4)-methylcytidine(1402) in 16S rRNA + S-adenosyl-L-homocysteine + H(+). Its function is as follows. Specifically methylates the N4 position of cytidine in position 1402 (C1402) of 16S rRNA. The polypeptide is Ribosomal RNA small subunit methyltransferase H (Ehrlichia canis (strain Jake)).